A 338-amino-acid chain; its full sequence is Glycerol-3-phosphate dehydrogenase [NAD(P)+] (338 aa).

NADPH is bound by residues Ser-13, Trp-14, and Lys-108. Lys-108, Gly-139, and Ser-141 together coordinate sn-glycerol 3-phosphate. Ala-143 lines the NADPH pocket. Residues Lys-194, Asp-247, Ser-257, Arg-258, and Asn-259 each coordinate sn-glycerol 3-phosphate. The active-site Proton acceptor is the Lys-194. Arg-258 contacts NADPH. NADPH is bound by residues Val-282 and Glu-284.

The protein belongs to the NAD-dependent glycerol-3-phosphate dehydrogenase family.

Its subcellular location is the cytoplasm. It carries out the reaction sn-glycerol 3-phosphate + NAD(+) = dihydroxyacetone phosphate + NADH + H(+). The enzyme catalyses sn-glycerol 3-phosphate + NADP(+) = dihydroxyacetone phosphate + NADPH + H(+). Its pathway is membrane lipid metabolism; glycerophospholipid metabolism. Catalyzes the reduction of the glycolytic intermediate dihydroxyacetone phosphate (DHAP) to sn-glycerol 3-phosphate (G3P), the key precursor for phospholipid synthesis. This chain is Glycerol-3-phosphate dehydrogenase [NAD(P)+], found in Listeria monocytogenes serotype 4b (strain CLIP80459).